A 163-amino-acid chain; its full sequence is Large ribosomal subunit protein uL11 (163 aa).

Residues 1–26 (MAETIEVLVAGGQADPGPPLGPELGP) are disordered.

It belongs to the universal ribosomal protein uL11 family. In terms of assembly, part of the ribosomal stalk of the 50S ribosomal subunit. Interacts with L10 and the large rRNA to form the base of the stalk. L10 forms an elongated spine to which L12 dimers bind in a sequential fashion forming a multimeric L10(L12)X complex.

In terms of biological role, forms part of the ribosomal stalk which helps the ribosome interact with GTP-bound translation factors. The chain is Large ribosomal subunit protein uL11 from Halobacterium salinarum (strain ATCC 29341 / DSM 671 / R1).